The primary structure comprises 183 residues: MVTPFPEVSEWLCIGQIVGAHGLRGEVKVKPFSDFPERFTVPGCRWLRSPRQPQPYAVTLLRGRFLPRAEQFVVTFAEISDRTAAEALKGAEILVPASDRPPLAANEYHLMDLIGLAVYHQGERVGEVVGLVNAGNDLLEVQLLDPAPKAPQSVYIPFVPAIVPVVDLAARRIEIDPPLGLLP.

One can recognise a PRC barrel domain in the interval alanine 105–leucine 181.

It belongs to the RimM family. As to quaternary structure, binds ribosomal protein uS19.

Its subcellular location is the cytoplasm. An accessory protein needed during the final step in the assembly of 30S ribosomal subunit, possibly for assembly of the head region. Essential for efficient processing of 16S rRNA. May be needed both before and after RbfA during the maturation of 16S rRNA. It has affinity for free ribosomal 30S subunits but not for 70S ribosomes. This Thermosynechococcus vestitus (strain NIES-2133 / IAM M-273 / BP-1) protein is Ribosome maturation factor RimM.